The following is a 1127-amino-acid chain: Nck-associated protein 1-like (1127 aa).

The segment at 638 to 670 (KAKNKKTRKQRQTPRKGEPERDKPGAESHRKNR) is disordered. Residues 639 to 651 (AKNKKTRKQRQTP) show a composition bias toward basic residues. Residues 652–666 (RKGEPERDKPGAESH) show a composition bias toward basic and acidic residues. A helical membrane pass occupies residues 996–1016 (VACLLLIFLAVSLPLLATDPS).

Belongs to the HEM-1/HEM-2 family. As to quaternary structure, in hematopoietic cells, component of the WAVE2 complex composed of ABI1, CYFIP1/SRA1, NCKAP1L/HEM1 and WASF2/WAVE2. Interacts with ARHGAP4, PIK3C3/VPS34 and PPP1R12A/MYPT1. Interacts with mammalian target of rapamycin complex 2 (mTORC2) components, including MTOR and RICTOR. Expressed only in cells of hematopoietic origin. Expressed in neutrophils (at protein level). Expressed in T-cells (at protein level).

The protein resides in the cell membrane. Its subcellular location is the cytoplasm. Essential hematopoietic-specific regulator of the actin cytoskeleton. Controls lymphocyte development, activation, proliferation and homeostasis, erythrocyte membrane stability, as well as phagocytosis and migration by neutrophils and macrophages. Component of the WAVE2 complex which signals downstream of RAC to stimulate F-actin polymerization. Required for stabilization and/or translation of the WAVE2 complex proteins in hematopoietic cells. Within the WAVE2 complex, enables the cortical actin network to restrain excessive degranulation and granule release by T-cells. Required for efficient T-lymphocyte and neutrophil migration. Exhibits complex cycles of activation and inhibition to generate waves of propagating the assembly with actin. Also involved in mechanisms WAVE-independent to regulate myosin and actin polymerization during neutrophil chemotaxis. In T-cells, required for proper mechanistic target of rapamycin complex 2 (mTORC2)-dependent AKT phosphorylation, cell proliferation and cytokine secretion, including that of IL2 and TNF. The protein is Nck-associated protein 1-like of Homo sapiens (Human).